A 247-amino-acid polypeptide reads, in one-letter code: MIIYPTMELQNGRCVTLERGRLDAPMLWHVDPFETVSGWASAGAEWMHLTDLDAVAGTSGNAELVEQIIRKAEIPVQLAGGMRSRERIEHWIDKGAGRIVIGTLAARDPELVKELAKRHPDQIVLSVDVWQGHVMTDGWRSQSAYTPEAFIDAFADVPFAAIVVTDIDSDVEEVEAKLGLISGLAAHSRTPVIASGVVRGADDISRLAYVPNIAGALVGRALFRKSLSLEDALSIAASAHERVAQFQ.

Residue Glu-8 is the Proton acceptor of the active site. Asp-128 serves as the catalytic Proton donor.

The protein belongs to the HisA/HisF family.

It localises to the cytoplasm. It carries out the reaction 1-(5-phospho-beta-D-ribosyl)-5-[(5-phospho-beta-D-ribosylamino)methylideneamino]imidazole-4-carboxamide = 5-[(5-phospho-1-deoxy-D-ribulos-1-ylimino)methylamino]-1-(5-phospho-beta-D-ribosyl)imidazole-4-carboxamide. The protein operates within amino-acid biosynthesis; L-histidine biosynthesis; L-histidine from 5-phospho-alpha-D-ribose 1-diphosphate: step 4/9. This is 1-(5-phosphoribosyl)-5-[(5-phosphoribosylamino)methylideneamino] imidazole-4-carboxamide isomerase 2 from Ruegeria pomeroyi (strain ATCC 700808 / DSM 15171 / DSS-3) (Silicibacter pomeroyi).